Consider the following 125-residue polypeptide: MARIAGVNIPTNKRVAISLRYIYGIGPAQAQKICTELSIPDERRVNQLSDDEILRIRELIDREYRVEGDLRREVAMNIKRLMDLGCYRGLRHRRGLPVRGQRTHTNARTRKGKAVAIAGKKKVTR.

This sequence belongs to the universal ribosomal protein uS13 family. In terms of assembly, part of the 30S ribosomal subunit. Forms a loose heterodimer with protein S19. Forms two bridges to the 50S subunit in the 70S ribosome.

Functionally, located at the top of the head of the 30S subunit, it contacts several helices of the 16S rRNA. In the 70S ribosome it contacts the 23S rRNA (bridge B1a) and protein L5 of the 50S subunit (bridge B1b), connecting the 2 subunits; these bridges are implicated in subunit movement. Contacts the tRNAs in the A and P-sites. The chain is Small ribosomal subunit protein uS13 from Granulibacter bethesdensis (strain ATCC BAA-1260 / CGDNIH1).